A 245-amino-acid polypeptide reads, in one-letter code: Ribonuclease PH (245 aa).

Residues R86 and 124 to 126 (GTR) contribute to the phosphate site.

The protein belongs to the RNase PH family. As to quaternary structure, homohexameric ring arranged as a trimer of dimers. It has been suggested that the active form is the dimer which binds tRNA and that the hexameric form protects the substrate recognition loop (approximately residues 65-82) from proteolysis.

It catalyses the reaction tRNA(n+1) + phosphate = tRNA(n) + a ribonucleoside 5'-diphosphate. Functionally, phosphorolytic 3'-5' exoribonuclease that plays an important role in tRNA 3'-end maturation. Removes nucleotide residues following the 3'-CCA terminus of tRNAs; can also add nucleotides to the ends of RNA molecules by using nucleoside diphosphates as substrates, but this may not be physiologically important. Probably plays a role in initiation of 16S rRNA degradation (leading to ribosome degradation) during starvation. Plays a role in the secondary pathway of 23S rRNA 3' end maturation. This is Ribonuclease PH from Bacillus subtilis (strain 168).